Consider the following 1396-residue polypeptide: MTTVSCPANVITTTESDRIAGLFNIPAGIIPTGNVLSTIEVCAHRCIFDFFKQIRSDDNSLYSAQFDILLGTYCNTLNFVRFLELGLSVACICTKFPELAYVRDGVIQFEVQQPMIARDGPHPVDQPVHNYMVKRIHKRSLSAAFAIASEALSLLSNTYVDGTEIDSSLRIRAIQQMARNLRTVLDSFERGTADQLLGVLLEKAPPLSLLSPINKFQPEGHLNRVARAALLSDLKRRVCADMFFMTRHAREPRLISAYLSDMVSCTQPSVMVSRITHTNTRGRQVDGVLVTTATLKRQLLQGILQIDDTAADVPVTYGEMVLQGTNLVTALVMGKAVRGMDDVARHLLDITDPNTLNIPSIPPQSNSDSTTAGLPVNARVPADLVIVGDKLVFLEALERRVYQATRVAYPLIGNIDITFIMPMGVFQANSMDRYTRHAGDFSTVSEQDPRQFPPQGIFFYNKDGILTQLTLRDAMGTICHSSLLDVEATLVALRQQHLDRQCYFGVYVAEGTEDTLDVQMGRFMETWADMMPHHPHWVNEHLTILQFIAPSNPRLRFELNPAFDFFVAPGDVDLPGPQRPPEAMPTVNATLRIINGNIPVPLCPISFRDCRGTQLGLGRHTMTPATIKAVKDTFEDRAYPTIFYMLEAVIHGNERNFCALLRLLTQCIRGYWEQSHRVAFVNNFHMLMYITTYLGNGELPEVCINIYRDLLQHVRALRQTITDFTIQGEGHNGETSEALNNILTDDTFIAPILWDCDALIYRDEAARDRLPAIRVSGRNGYQALHFVDMAGHNFQRRDNVLIHGRPVRGDTGQGIPITPHHDREWGILSKIYYYIVIPAFSRGSCCTMGVRYDRLYPALQAVIVPEIPADEEAPTTPEDPRHPLHAHQLVPNSLNVYFHNAHLTVDGDALLTLQELMGDMAERTTAILVSSAPDAGAATATTRNMRIYDGALYHGLIMMAYQAYDETIATGTFFYPVPVNPLFACPEHLASLRGMTNARRVLAKMVPPIPPFLGANHHATIRQPVAYHVTHSKSDFNTLTYSLLGGYFKFTPISLTHQLRTGFHPGIAFTVVRQDRFATEQLLYAERASESYFVGQIQVHHHDAIGGVNFTLTQPRAHVDLGVGYTAVCATAALRCPLTDMGNTAQNLFFSRGGVPMLHDNVTESLRRITASGGRLNPTEPLPIFGGLRPATSAGIARGQASVCEFVAMPVSTDLQYFRTACNPRGRASGMLYMGDRDADIEAIMFDHTQSDVAYTDRATLNPWASQKHSYGDRLYNGTYNLTGASPIYSPCFKFFTPAEVNTNCNTLDRLLMEAKAVASQSSTDTEYQFKRPPGSTEMTQDPCGLFQEAYPPLCSSDAAMLRTAHAGETGADEVHLAQYLIRDASPLRGCLPLPR.

Belongs to the herpesviridae major capsid protein family. As to quaternary structure, homomultimer. Makes the hexons and eleven out of twelve pentons. Interacts with triplex proteins 1/TRX1 and 2/TRX2; adjacent capsomers are linked together in groups of three by triplexes, heterotrimeric complexes composed of one molecule of TRX1 and two molecules of TRX2. Interacts with scaffold protein; this interaction allows efficient MCP transport to the host nucleus. Interacts with capsid vertex component 2/CVC2. Interacts with the small capsomere-interacting protein/SCP.

It localises to the virion. Its subcellular location is the host nucleus. Functionally, self-assembles to form an icosahedral capsid with a T=16 symmetry, about 200 nm in diameter, and consisting of 150 hexons and 12 pentons (total of 162 capsomers). Hexons form the edges and faces of the capsid and are each composed of six MCP molecules. In contrast, one penton is found at each of the 12 vertices. Eleven of the pentons are MCP pentamers, while the last vertex is occupied by the portal complex. The capsid is surrounded by a layer of proteinaceous material designated the tegument which, in turn, is enclosed in an envelope of host cell-derived lipids containing virus-encoded glycoproteins. The protein is Major capsid protein of Varicella-zoster virus (strain Dumas) (HHV-3).